The primary structure comprises 209 residues: GTP-binding protein RHB1 (209 aa).

N-acetylmethionine is present on Met-1. Residues Gly-28, Lys-29, Thr-30, Thr-31, Val-42, Tyr-45, Thr-48, Asp-132, and Ala-172 each contribute to the GTP site. Residue Thr-30 participates in Mg(2+) binding. An Effector region motif is present at residues Tyr-45–Phe-53. Thr-48 lines the Mg(2+) pocket. Cys-206 is subject to Cysteine methyl ester. A lipid anchor (S-farnesyl cysteine) is attached at Cys-206. Residues Ser-207 to Met-209 constitute a propeptide, removed in mature form.

The protein belongs to the small GTPase superfamily. Rheb family. In terms of assembly, interacts with BTN2.

The protein localises to the cell membrane. The enzyme catalyses GTP + H2O = GDP + phosphate + H(+). In terms of biological role, binds GTP and exhibits intrinsic GTPase activity. Involved in the regulation of arginine and lysine uptake. Acts through the CAN1 permease. The protein is GTP-binding protein RHB1 (RHB1) of Saccharomyces cerevisiae (strain ATCC 204508 / S288c) (Baker's yeast).